The primary structure comprises 347 residues: tRNA N6-adenosine threonylcarbamoyltransferase (347 aa).

Residues H115 and H119 each contribute to the Fe cation site. Residues L138 to G142, D171, G184, and N277 each bind substrate. Residue D305 coordinates Fe cation.

Belongs to the KAE1 / TsaD family. Fe(2+) is required as a cofactor.

It localises to the cytoplasm. It catalyses the reaction L-threonylcarbamoyladenylate + adenosine(37) in tRNA = N(6)-L-threonylcarbamoyladenosine(37) in tRNA + AMP + H(+). Its function is as follows. Required for the formation of a threonylcarbamoyl group on adenosine at position 37 (t(6)A37) in tRNAs that read codons beginning with adenine. Is involved in the transfer of the threonylcarbamoyl moiety of threonylcarbamoyl-AMP (TC-AMP) to the N6 group of A37, together with TsaE and TsaB. TsaD likely plays a direct catalytic role in this reaction. This is tRNA N6-adenosine threonylcarbamoyltransferase from Polaromonas sp. (strain JS666 / ATCC BAA-500).